We begin with the raw amino-acid sequence, 1040 residues long: Multidrug resistance protein MdtB (1040 aa).

12 helical membrane-spanning segments follow: residues 16 to 36 (FIMRPVATTLLMVAILLAGII), 347 to 367 (LMMAIALVVMIIYLFLRNIPA), 369 to 389 (IIPGVAVPLSLIGTFAVMVFL), 396 to 416 (LTLMALTIATGFVVDDAIVVI), 440 to 460 (IGFTIISLTFSLIAVLIPLLF), 472 to 492 (FAITLAVAILISAVVSLTLTP), 537 to 557 (WLTLSVALSTLLLSVLLWVFI), 863 to 883 (LGSTVWLIVAAVVAMYIVLGI), 888 to 908 (FIHPITILSTLPTAGVGALLA), 911 to 931 (IAGSELDVIAIIGIILLIGIV), 968 to 988 (ILMTTLAALLGALPLMLSTGV), and 998 to 1018 (IGMVGGLIVSQVLTLFTTPVI).

Belongs to the resistance-nodulation-cell division (RND) (TC 2.A.6) family. MdtB subfamily. In terms of assembly, part of a tripartite efflux system composed of MdtA, MdtB and MdtC. MdtB forms a heteromultimer with MdtC.

It localises to the cell inner membrane. The MdtABC tripartite complex confers resistance against novobiocin and deoxycholate. In Escherichia coli O139:H28 (strain E24377A / ETEC), this protein is Multidrug resistance protein MdtB.